Consider the following 132-residue polypeptide: MVEAFCATWKLTESQNFDEYMKALGVGFATRQVGNVTKPTVIISQEGDRVVIRTQSTFKNTEISFHLGEEFDETTADDRNCKSVVSLDGDKLVHVQKWDGKETNFVREIKDGKMIMTLTFGDVVAVRHYEKA.

Position 2 is an N-acetylvaline (Val2). 127–129 (RHY) is a binding site for a fatty acid.

The protein belongs to the calycin superfamily. Fatty-acid binding protein (FABP) family. Monomer.

It localises to the cytoplasm. Its function is as follows. FABPs are thought to play a role in the intracellular transport of long-chain fatty acids and their acyl-CoA esters. Binds oleic and palmitic acids but not palmitoyl CoA. The chain is Fatty acid-binding protein, brain (FABP7) from Bos taurus (Bovine).